Consider the following 358-residue polypeptide: Ornithine cyclodeaminase (358 aa).

L-ornithine-binding residues include Arg-52 and Lys-76. NAD(+) is bound by residues Thr-91, Arg-119, 146 to 147 (AQ), Asp-168, Thr-208, 231 to 234 (VGGD), Lys-238, and Ser-299. An L-ornithine-binding site is contributed by Arg-119. Asp-234 lines the L-ornithine pocket. Asp-234 acts as the Proton donor/acceptor in catalysis. Val-300 serves as a coordination point for L-ornithine.

It belongs to the ornithine cyclodeaminase/mu-crystallin family. The cofactor is NAD(+).

The catalysed reaction is L-ornithine = L-proline + NH4(+). It functions in the pathway amino-acid biosynthesis; L-proline biosynthesis; L-proline from L-ornithine: step 1/1. In terms of biological role, catalyzes the conversion of L-ornithine into L-proline with release of ammonia. The polypeptide is Ornithine cyclodeaminase (Brucella suis biovar 1 (strain 1330)).